The chain runs to 473 residues: Cholesterol 22-monohydroxylase CYP90B52 (473 aa).

Residues 2–22 traverse the membrane as a helical segment; it reads EGLLLLLPTAIIALYLYISLI. Position 422 (C422) interacts with heme.

It belongs to the cytochrome P450 family. In terms of tissue distribution, mainly expressed in leaves and roots and, at low levels, in fruits and stems.

Its subcellular location is the membrane. The enzyme catalyses cholesterol + reduced [NADPH--hemoprotein reductase] + O2 = (22S)-22-hydroxycholesterol + oxidized [NADPH--hemoprotein reductase] + H2O + H(+). The protein operates within steroid metabolism; cholesterol metabolism. Functionally, canonical brassinosteroid (BR)-biosynthetic enzyme capable of converting cholesterol to 22S-hydroxycholesterol via sterol-C22 hydroxylation. The polypeptide is Cholesterol 22-monohydroxylase CYP90B52 (Paris polyphylla (Daiswa polyphylla)).